The following is a 282-amino-acid chain: PAK4-inhibitor INKA1 (282 aa).

2 disordered regions span residues 21 to 50 and 92 to 127; these read RDTG…QFRA and GFSE…FSVS. Inka box regions lie at residues 163–200 and 256–282; these read EAED…ELPE and PADI…VSYL.

Belongs to the INKA family. In terms of assembly, interacts with PAK4. Expressed in tissues of the developing head during neurulation.

Its subcellular location is the nucleus. The protein resides in the cytoplasm. In terms of biological role, inhibitor of the serine/threonine-protein kinase PAK4. Acts by binding PAK4 in a substrate-like manner, inhibiting the protein kinase activity. In Mus musculus (Mouse), this protein is PAK4-inhibitor INKA1.